Here is a 469-residue protein sequence, read N- to C-terminus: Argininosuccinate lyase (469 aa).

Belongs to the lyase 1 family. Argininosuccinate lyase subfamily.

Its subcellular location is the cytoplasm. It carries out the reaction 2-(N(omega)-L-arginino)succinate = fumarate + L-arginine. It participates in amino-acid biosynthesis; L-arginine biosynthesis; L-arginine from L-ornithine and carbamoyl phosphate: step 3/3. The polypeptide is Argininosuccinate lyase (Burkholderia orbicola (strain MC0-3)).